Consider the following 876-residue polypeptide: Ergothioneine biosynthesis protein 1 (876 aa).

Positions 36 to 350 are L-histidine N(alpha)-methyltransferase; the sequence is IIDIRRVAVE…TYGNEYGLHL (315 aa). Tyr-88 is a binding site for L-histidine. The S-adenosyl-L-methionine site is built by Gly-119, Lys-125, and Asp-146. L-histidine-binding positions include Asn-202, Tyr-242, and 315-317; that span reads EQS. A hercynylcysteine S-oxide synthase region spans residues 378–874; sequence ALWATWDVVT…YAWVGARVVR (497 aa). Positions 413, 506, and 510 each coordinate Fe cation. Disordered stretches follow at residues 631-650 and 732-761; these read GTTN…QQLP and TNNG…SNTT. The segment covering 744–758 has biased composition (low complexity); it reads PSSETPAESSSPSDS.

This sequence in the N-terminal section; belongs to the methyltransferase superfamily. EgtD family. It in the C-terminal section; belongs to the EgtB family. Requires Fe(2+) as cofactor.

The protein resides in the cytoplasm. Its subcellular location is the nucleus. The catalysed reaction is L-histidine + 3 S-adenosyl-L-methionine = hercynine + 3 S-adenosyl-L-homocysteine + 3 H(+). It catalyses the reaction hercynine + L-cysteine + O2 = S-(hercyn-2-yl)-L-cysteine S-oxide + H2O. Its pathway is amino-acid biosynthesis; ergothioneine biosynthesis. In terms of biological role, catalyzes the SAM-dependent triple methylation of the alpha-amino group of histidine to form hercynine and subsequent conjugation with cysteine and oxygen to form hercynylcysteine sulfoxide, the first two steps in the biosynthesis pathway of ergothioneine. Ergothioneine is an unusual thio-histidine betaine amino acid that acts as an antioxidant against peroxide in conidia and contributes to conidial longevity. In Neurospora crassa (strain ATCC 24698 / 74-OR23-1A / CBS 708.71 / DSM 1257 / FGSC 987), this protein is Ergothioneine biosynthesis protein 1.